A 436-amino-acid polypeptide reads, in one-letter code: Chromosomal replication initiator protein DnaA (436 aa).

Residues 1–69 (MLADEVIELL…ANIFEVKTGI (69 aa)) form a domain I, interacts with DnaA modulators region. The segment at 69–99 (IKPVISITTQKNRVSIKAKDIDVKQIRTQSS) is domain II. A domain III, AAA+ region region spans residues 100–314 (LLNPSYTFES…SAIININAFA (215 aa)). 4 residues coordinate ATP: G144, G146, K147, and T148. The tract at residues 315-436 (NIMRQEITLE…ELKNKITSKE (122 aa)) is domain IV, binds dsDNA.

It belongs to the DnaA family. In terms of assembly, oligomerizes as a right-handed, spiral filament on DNA at oriC.

It localises to the cytoplasm. In terms of biological role, plays an essential role in the initiation and regulation of chromosomal replication. ATP-DnaA binds to the origin of replication (oriC) to initiate formation of the DNA replication initiation complex once per cell cycle. Binds the DnaA box (a 9 base pair repeat at the origin) and separates the double-stranded (ds)DNA. Forms a right-handed helical filament on oriC DNA; dsDNA binds to the exterior of the filament while single-stranded (ss)DNA is stabiized in the filament's interior. The ATP-DnaA-oriC complex binds and stabilizes one strand of the AT-rich DNA unwinding element (DUE), permitting loading of DNA polymerase. After initiation quickly degrades to an ADP-DnaA complex that is not apt for DNA replication. Binds acidic phospholipids. This Campylobacter fetus subsp. fetus (strain 82-40) protein is Chromosomal replication initiator protein DnaA.